A 301-amino-acid polypeptide reads, in one-letter code: tRNA-cytidine(32) 2-sulfurtransferase (301 aa).

Positions 55–60 match the PP-loop motif motif; that stretch reads SGGKDS. The [4Fe-4S] cluster site is built by C130, C133, and C221.

The protein belongs to the TtcA family. Homodimer. Mg(2+) serves as cofactor. [4Fe-4S] cluster is required as a cofactor.

It is found in the cytoplasm. It carries out the reaction cytidine(32) in tRNA + S-sulfanyl-L-cysteinyl-[cysteine desulfurase] + AH2 + ATP = 2-thiocytidine(32) in tRNA + L-cysteinyl-[cysteine desulfurase] + A + AMP + diphosphate + H(+). The protein operates within tRNA modification. Catalyzes the ATP-dependent 2-thiolation of cytidine in position 32 of tRNA, to form 2-thiocytidine (s(2)C32). The sulfur atoms are provided by the cysteine/cysteine desulfurase (IscS) system. This chain is tRNA-cytidine(32) 2-sulfurtransferase, found in Acinetobacter baylyi (strain ATCC 33305 / BD413 / ADP1).